We begin with the raw amino-acid sequence, 391 residues long: Elongation factor Tu (391 aa).

The tr-type G domain maps to 10–201; sequence KPHVNIGTIG…AVDAYIPTPE (192 aa). The interval 19 to 26 is G1; the sequence is GHVDHGKT. 19–26 serves as a coordination point for GTP; that stretch reads GHVDHGKT. T26 contacts Mg(2+). The segment at 55-59 is G2; sequence GITIS. Positions 76–79 are G3; the sequence is DCPG. GTP is bound by residues 76–80 and 131–134; these read DCPGH and NKVD. The G4 stretch occupies residues 131–134; that stretch reads NKVD. A G5 region spans residues 169-171; that stretch reads SAL.

The protein belongs to the TRAFAC class translation factor GTPase superfamily. Classic translation factor GTPase family. EF-Tu/EF-1A subfamily. As to quaternary structure, monomer.

The protein localises to the cytoplasm. It catalyses the reaction GTP + H2O = GDP + phosphate + H(+). Functionally, GTP hydrolase that promotes the GTP-dependent binding of aminoacyl-tRNA to the A-site of ribosomes during protein biosynthesis. This Rhizobium meliloti (strain 1021) (Ensifer meliloti) protein is Elongation factor Tu.